The primary structure comprises 251 residues: ATP synthase subunit a (251 aa).

5 helical membrane passes run 28–48 (TDTV…AFFL), 84–104 (IAPF…ISNW), 130–150 (INYV…AGIW), 192–212 (IFAG…IMWA), and 220–240 (FDLF…ILYF).

The protein belongs to the ATPase A chain family. As to quaternary structure, F-type ATPases have 2 components, CF(1) - the catalytic core - and CF(0) - the membrane proton channel. CF(1) has five subunits: alpha(3), beta(3), gamma(1), delta(1), epsilon(1). CF(0) has three main subunits: a(1), b(2) and c(9-12). The alpha and beta chains form an alternating ring which encloses part of the gamma chain. CF(1) is attached to CF(0) by a central stalk formed by the gamma and epsilon chains, while a peripheral stalk is formed by the delta and b chains.

Its subcellular location is the cell membrane. Functionally, key component of the proton channel; it plays a direct role in the translocation of protons across the membrane. The chain is ATP synthase subunit a from Mycobacterium leprae (strain TN).